A 105-amino-acid polypeptide reads, in one-letter code: Met repressor (105 aa).

This sequence belongs to the MetJ family. Homodimer.

The protein localises to the cytoplasm. Functionally, this regulatory protein, when combined with SAM (S-adenosylmethionine) represses the expression of the methionine regulon and of enzymes involved in SAM synthesis. This is Met repressor from Klebsiella pneumoniae subsp. pneumoniae (strain ATCC 700721 / MGH 78578).